A 510-amino-acid chain; its full sequence is Ribonuclease Y (510 aa).

The helical transmembrane segment at 4 to 24 (LLWAVVALLAGLAGGAGIGVY) threads the bilayer. Residues 200 to 260 (TVSTVNLPSE…VRREVARVAL (61 aa)) form the KH domain. One can recognise an HD domain in the interval 326–419 (VLQHSLECAL…VIAADAISGA (94 aa)).

Belongs to the RNase Y family.

It is found in the cell membrane. Endoribonuclease that initiates mRNA decay. This Chloroflexus aurantiacus (strain ATCC 29366 / DSM 635 / J-10-fl) protein is Ribonuclease Y.